The chain runs to 231 residues: NADH-ubiquinone oxidoreductase chain 4 (231 aa).

A run of 7 helical transmembrane segments spans residues 1 to 21 (PIAGSMILAAILLKLGGYGII), 34 to 54 (VFLPFIVLALWGAILANLTCL), 63 to 85 (IAYSSISHMGLVVAAIIIQTPWG), 89 to 111 (AMALMIAHGFTSSALFCLANTTY), 128 to 148 (MMPMATTWWLMANLMNIAIPP), 169 to 189 (TIIMLGLSMLITASYSLHMFL), and 211 to 231 (LLMTLHLIPLLMISFKPELVT).

This sequence belongs to the complex I subunit 4 family.

The protein localises to the mitochondrion membrane. The catalysed reaction is a ubiquinone + NADH + 5 H(+)(in) = a ubiquinol + NAD(+) + 4 H(+)(out). In terms of biological role, core subunit of the mitochondrial membrane respiratory chain NADH dehydrogenase (Complex I) that is believed to belong to the minimal assembly required for catalysis. Complex I functions in the transfer of electrons from NADH to the respiratory chain. The immediate electron acceptor for the enzyme is believed to be ubiquinone. This is NADH-ubiquinone oxidoreductase chain 4 (MT-ND4) from Sistrurus miliarius (Pigmy rattlesnake).